Reading from the N-terminus, the 41-residue chain is Large ribosomal subunit protein bL36 (41 aa).

Belongs to the bacterial ribosomal protein bL36 family.

The protein is Large ribosomal subunit protein bL36 of Parvibaculum lavamentivorans (strain DS-1 / DSM 13023 / NCIMB 13966).